Here is a 306-residue protein sequence, read N- to C-terminus: MIQKSRPALLQHQDVGDRVETLMLQPVIKAFLCGSISGTCSTVLFQPLDLLKTRLQTLQPSAHGSRRVGMLALLLTVVRTESLLGLWKGMSPSIVRCVPGVGIYFGTLYSLKQYFLRGHPPTALESVILGAGSRSVAGVCMSPITVIKTRYESGRYGYQSIYAALRSICHSEGFRGLFSGLTATLLRDAPFSGIYLMFYSQTKNVVLHSTDQLDAVLVPVVNFSCGIFAGILASLVTQPADVIKTHMQLSPVKFRWIGQSVTLIFKDYGLRGFFQGSVPRALRRTLVAAMAWTVYEEMMAKMGLKS.

3 Solcar repeats span residues 25–114, 121–205, and 217–301; these read QPVI…LKQY, PTAL…TKNV, and LVPV…MMAK. 6 helical membrane-spanning segments follow: residues 31-56, 89-115, 127-152, 180-203, 221-247, and 276-294; these read FLCG…TRLQ, GMSP…KQYF, VILG…TRYE, GLTA…SQTK, VNFS…KTHM, and GSVP…AWTV.

The protein belongs to the mitochondrial carrier (TC 2.A.29) family. SLC25A38 subfamily.

Its subcellular location is the mitochondrion inner membrane. It catalyses the reaction glycine(in) = glycine(out). Its function is as follows. Mitochondrial glycine transporter that imports glycine into the mitochondrial matrix. Plays an important role in providing glycine for the first enzymatic step in heme biosynthesis, the condensation of glycine with succinyl-CoA to produce 5-aminolevulinate (ALA) in the mitochondrial matrix. Required during erythropoiesis. Plays a role as pro-apoptotic protein that induces caspase-dependent apoptosis. In Ovis aries (Sheep), this protein is Mitochondrial glycine transporter.